Here is a 222-residue protein sequence, read N- to C-terminus: GMP/IMP nucleotidase YrfG (222 aa).

The active-site Nucleophile is the D9. Mg(2+) contacts are provided by D9 and D11. Residues D9–D11 and K149 contribute to the substrate site. D174 provides a ligand contact to Mg(2+).

It belongs to the HAD-like hydrolase superfamily. Mg(2+) serves as cofactor. It depends on Mn(2+) as a cofactor. Co(2+) is required as a cofactor. Requires Zn(2+) as cofactor.

The enzyme catalyses a ribonucleoside 5'-phosphate + H2O = a ribonucleoside + phosphate. Its function is as follows. Catalyzes the dephosphorylation of different purine nucleotides (GMP and IMP). Also hydrolyzes flavin mononucleotide (FMN). The protein is GMP/IMP nucleotidase YrfG (yrfG) of Escherichia coli (strain K12).